The chain runs to 304 residues: C-type lectin domain family 10 member A (304 aa).

The Cytoplasmic segment spans residues 1–35 (MIYENLQNSRIEEKTQEPGKAPSQSFLWRILSWTH). Residues 36-56 (LLLFSLGLSLLLLVVVSVIGS) traverse the membrane as a helical; Signal-anchor for type II membrane protein segment. The Extracellular segment spans residues 57–304 (QNSQLRRDLG…ICEMKLAKES (248 aa)). 2 N-linked (GlcNAc...) asparagine glycosylation sites follow: asparagine 74 and asparagine 166. Residues 172-298 (CCPLHWTEHE…QRTFRWICEM (127 aa)) enclose the C-type lectin domain. Cystine bridges form between cysteine 173-cysteine 184, cysteine 201-cysteine 296, and cysteine 274-cysteine 288.

In terms of assembly, homooligomer. Interacts with SIGLEC1, which may act as a counter-receptor for CLEC10A in lymph node. As to expression, detected in lymph node in the subcapsular sinus, interfollicular regions, T and B-cell boundary and in the areas surrounding high endothelial venules (at protein level). Expressed on the surface of activated macrophages. Expressed in heart, lung, testis, skeletal muscle, spleen, brain, kidney and thymus. Expressed in P388, RAW 264.7 and M1 cell lines.

It is found in the membrane. In terms of biological role, recognizes terminal galactose and N-acetylgalactosamine units. May participate in the interaction between tumoricidal macrophages and tumor cells. Plays a role in the recruitment of inflammatory monocytes to adipose tissue in diet-induced obesity. The sequence is that of C-type lectin domain family 10 member A (Clec10a) from Mus musculus (Mouse).